We begin with the raw amino-acid sequence, 653 residues long: J protein JJJ2 (653 aa).

The region spanning 14–78 (TLYSVLNLKY…KEKMKYDSKL (65 aa)) is the J domain. Disordered regions lie at residues 85-308 (DYSP…SSTE) and 490-512 (VSPK…EENL). Composition is skewed to polar residues over residues 161-171 (NAKSYQNSKKS) and 187-200 (ATSF…SSSV). Positions 213–241 (SGSAVGSESRISSSGSESSSNVNSATGSS) are enriched in low complexity. Positions 298 to 308 (PVKTTPNSSTE) are enriched in polar residues.

The protein localises to the cytoplasm. The protein resides in the nucleus. This Kluyveromyces lactis (strain ATCC 8585 / CBS 2359 / DSM 70799 / NBRC 1267 / NRRL Y-1140 / WM37) (Yeast) protein is J protein JJJ2 (JJJ2).